Here is a 128-residue protein sequence, read N- to C-terminus: MAFTGKYEIESEKNYDEFMKRLALPSDAIDKARNLKIISEVKQDGQNFTWSQQYPGGHSITNTFTIGKECDIETIGGKKFKATVQMEGGKVVVNSPNYHHTAEIVDGKLVEVSTVGGVTYERVSKKLA.

Alanine 2 carries the post-translational modification N-acetylalanine.

The protein belongs to the calycin superfamily. Fatty-acid binding protein (FABP) family. In terms of tissue distribution, found exclusively in the ileum and to a lesser extent in distal jejunum.

The protein localises to the cytoplasm. The protein resides in the membrane. In terms of biological role, binds to bile acids and is involved in enterohepatic bile acid metabolism. Required for efficient apical to basolateral transport of conjugated bile acids in ileal enterocytes. Stimulates gastric acid and pepsinogen secretion. The chain is Gastrotropin (FABP6) from Sus scrofa (Pig).